The chain runs to 97 residues: Cytochrome c oxidase subunit 4 isoform 1, mitochondrial (97 aa).

A mitochondrion-targeting transit peptide spans 1–22; sequence MLATRVFNLIGRRAISTSVCVR. The residue at position 29 (K29) is an N6-acetyllysine; alternate. The residue at position 29 (K29) is an N6-succinyllysine; alternate. At K53 the chain carries N6-acetyllysine. 2 positions are modified to phosphoserine: S56 and S58. At K60 the chain carries N6-acetyllysine; alternate. At K60 the chain carries N6-succinyllysine; alternate. The residue at position 67 (K67) is an N6-acetyllysine.

Belongs to the cytochrome c oxidase IV family. As to quaternary structure, component of the cytochrome c oxidase (complex IV, CIV), a multisubunit enzyme composed of 14 subunits. The complex is composed of a catalytic core of 3 subunits MT-CO1, MT-CO2 and MT-CO3, encoded in the mitochondrial DNA, and 11 supernumerary subunits COX4I, COX5A, COX5B, COX6A, COX6B, COX6C, COX7A, COX7B, COX7C, COX8 and NDUFA4, which are encoded in the nuclear genome. The complex exists as a monomer or a dimer and forms supercomplexes (SCs) in the inner mitochondrial membrane with NADH-ubiquinone oxidoreductase (complex I, CI) and ubiquinol-cytochrome c oxidoreductase (cytochrome b-c1 complex, complex III, CIII), resulting in different assemblies (supercomplex SCI(1)III(2)IV(1) and megacomplex MCI(2)III(2)IV(2)). Interacts with PHB2; the interaction decreases in absence of SPHK2. Interacts with AFG1L. Interacts with ABCB7; this interaction allows the regulation of cellular iron homeostasis and cellular reactive oxygen species (ROS) levels in cardiomyocytes. Interacts with FLVCR2; this interaction occurs in the absence of heme and is disrupted upon heme binding. Interacts with IRGC.

It localises to the mitochondrion inner membrane. The protein operates within energy metabolism; oxidative phosphorylation. Its function is as follows. Component of the cytochrome c oxidase, the last enzyme in the mitochondrial electron transport chain which drives oxidative phosphorylation. The respiratory chain contains 3 multisubunit complexes succinate dehydrogenase (complex II, CII), ubiquinol-cytochrome c oxidoreductase (cytochrome b-c1 complex, complex III, CIII) and cytochrome c oxidase (complex IV, CIV), that cooperate to transfer electrons derived from NADH and succinate to molecular oxygen, creating an electrochemical gradient over the inner membrane that drives transmembrane transport and the ATP synthase. Cytochrome c oxidase is the component of the respiratory chain that catalyzes the reduction of oxygen to water. Electrons originating from reduced cytochrome c in the intermembrane space (IMS) are transferred via the dinuclear copper A center (CU(A)) of subunit 2 and heme A of subunit 1 to the active site in subunit 1, a binuclear center (BNC) formed by heme A3 and copper B (CU(B)). The BNC reduces molecular oxygen to 2 water molecules using 4 electrons from cytochrome c in the IMS and 4 protons from the mitochondrial matrix. In Sus scrofa (Pig), this protein is Cytochrome c oxidase subunit 4 isoform 1, mitochondrial (COX4I1).